The sequence spans 412 residues: Putative competence-damage inducible protein (412 aa).

It belongs to the CinA family.

The chain is Putative competence-damage inducible protein from Bacillus cereus (strain ZK / E33L).